We begin with the raw amino-acid sequence, 111 residues long: Large ribosomal subunit protein eL31 (111 aa).

This sequence belongs to the eukaryotic ribosomal protein eL31 family.

This Dictyostelium discoideum (Social amoeba) protein is Large ribosomal subunit protein eL31 (rpl31).